Reading from the N-terminus, the 196-residue chain is Carnitine operon protein CaiE (196 aa).

A disordered region spans residues 173–196 (TQPLRQMEENRPRLQGTTDVTPKR). Positions 187–196 (QGTTDVTPKR) are enriched in polar residues.

This sequence belongs to the transferase hexapeptide repeat family.

It participates in amine and polyamine metabolism; carnitine metabolism. Overproduction of CaiE stimulates the activity of CaiB and CaiD. This chain is Carnitine operon protein CaiE, found in Escherichia coli O127:H6 (strain E2348/69 / EPEC).